The primary structure comprises 185 residues: Ribosome-recycling factor (185 aa).

Belongs to the RRF family.

Its subcellular location is the cytoplasm. Functionally, responsible for the release of ribosomes from messenger RNA at the termination of protein biosynthesis. May increase the efficiency of translation by recycling ribosomes from one round of translation to another. This Roseiflexus sp. (strain RS-1) protein is Ribosome-recycling factor.